Reading from the N-terminus, the 254-residue chain is Demethylmenaquinone methyltransferase (254 aa).

S-adenosyl-L-methionine is bound by residues T62, D80, 122–123, and S139; that span reads DG.

The protein belongs to the class I-like SAM-binding methyltransferase superfamily. MenG/UbiE family.

The enzyme catalyses a 2-demethylmenaquinol + S-adenosyl-L-methionine = a menaquinol + S-adenosyl-L-homocysteine + H(+). It functions in the pathway quinol/quinone metabolism; menaquinone biosynthesis; menaquinol from 1,4-dihydroxy-2-naphthoate: step 2/2. Its function is as follows. Methyltransferase required for the conversion of demethylmenaquinol (DMKH2) to menaquinol (MKH2). In Parafrankia sp. (strain EAN1pec), this protein is Demethylmenaquinone methyltransferase.